We begin with the raw amino-acid sequence, 148 residues long: Putative nickel-responsive regulator (148 aa).

Residues His77, His88, His90, and Cys96 each contribute to the Ni(2+) site.

Belongs to the transcriptional regulatory CopG/NikR family. Requires Ni(2+) as cofactor.

Its function is as follows. Transcriptional regulator. This chain is Putative nickel-responsive regulator, found in Bradyrhizobium diazoefficiens (strain JCM 10833 / BCRC 13528 / IAM 13628 / NBRC 14792 / USDA 110).